Consider the following 727-residue polypeptide: Probable metal-nicotianamine transporter YSL14 (727 aa).

Low complexity-rich tracts occupy residues 1–10 (MAQHTAAAAG) and 18–27 (AEAAAAAAAG). Residues 1–61 (MAQHTAAAAG…RNGGADDPDA (61 aa)) are disordered. Gly residues predominate over residues 45–54 (AGGGGGGRNG). 14 consecutive transmembrane segments (helical) span residues 84 to 104 (AFVV…KLNL), 107 to 127 (GIIP…VRLW), 152 to 172 (CVVS…LFGM), 194 to 214 (LGWM…ALVP), 256 to 276 (LGKY…YTAG), 314 to 334 (IVNV…WPLI), 359 to 379 (VFIS…KVLI), 432 to 452 (VAYG…PEIF), 460 to 480 (ILVA…GSGL), 492 to 512 (LAIF…LVGL), 546 to 566 (FISQ…VFWL), 604 to 624 (PENC…INLI), 646 to 666 (FYIG…LFVW), and 681 to 701 (VASG…ILAL).

This sequence belongs to the YSL (TC 2.A.67.2) family. In terms of tissue distribution, expressed in leaves and at low levels in roots.

It localises to the membrane. May be involved in the transport of nicotianamine-chelated metals. This Oryza sativa subsp. japonica (Rice) protein is Probable metal-nicotianamine transporter YSL14 (YSL14).